We begin with the raw amino-acid sequence, 157 residues long: Endoribonuclease YbeY (157 aa).

Positions 122, 126, and 132 each coordinate Zn(2+).

This sequence belongs to the endoribonuclease YbeY family. It depends on Zn(2+) as a cofactor.

The protein localises to the cytoplasm. Functionally, single strand-specific metallo-endoribonuclease involved in late-stage 70S ribosome quality control and in maturation of the 3' terminus of the 16S rRNA. The protein is Endoribonuclease YbeY of Lysinibacillus sphaericus (strain C3-41).